Consider the following 137-residue polypeptide: Large-conductance mechanosensitive channel (137 aa).

2 helical membrane passes run 9 to 29 (AFAVKGNVVDMAVGIIIGAAF) and 79 to 99 (IQTILDFVIVAFAIFMGVKAI).

This sequence belongs to the MscL family. In terms of assembly, homopentamer.

Its subcellular location is the cell inner membrane. In terms of biological role, channel that opens in response to stretch forces in the membrane lipid bilayer. May participate in the regulation of osmotic pressure changes within the cell. This is Large-conductance mechanosensitive channel from Pseudomonas paraeruginosa (strain DSM 24068 / PA7) (Pseudomonas aeruginosa (strain PA7)).